Consider the following 378-residue polypeptide: Queuine tRNA-ribosyltransferase (378 aa).

Residue aspartate 91 is the Proton acceptor of the active site. Substrate-binding positions include 91-95, aspartate 145, glutamine 189, and glycine 216; that span reads DSGGF. The segment at 247–253 is RNA binding; that stretch reads GVGKPED. The active-site Nucleophile is aspartate 266. The interval 271-275 is RNA binding; important for wobble base 34 recognition; sequence TRNAR. Zn(2+)-binding residues include cysteine 304, cysteine 306, cysteine 309, and histidine 335.

It belongs to the queuine tRNA-ribosyltransferase family. As to quaternary structure, homodimer. Within each dimer, one monomer is responsible for RNA recognition and catalysis, while the other monomer binds to the replacement base PreQ1. Zn(2+) is required as a cofactor.

It catalyses the reaction 7-aminomethyl-7-carbaguanine + guanosine(34) in tRNA = 7-aminomethyl-7-carbaguanosine(34) in tRNA + guanine. It participates in tRNA modification; tRNA-queuosine biosynthesis. Functionally, catalyzes the base-exchange of a guanine (G) residue with the queuine precursor 7-aminomethyl-7-deazaguanine (PreQ1) at position 34 (anticodon wobble position) in tRNAs with GU(N) anticodons (tRNA-Asp, -Asn, -His and -Tyr). Catalysis occurs through a double-displacement mechanism. The nucleophile active site attacks the C1' of nucleotide 34 to detach the guanine base from the RNA, forming a covalent enzyme-RNA intermediate. The proton acceptor active site deprotonates the incoming PreQ1, allowing a nucleophilic attack on the C1' of the ribose to form the product. After dissociation, two additional enzymatic reactions on the tRNA convert PreQ1 to queuine (Q), resulting in the hypermodified nucleoside queuosine (7-(((4,5-cis-dihydroxy-2-cyclopenten-1-yl)amino)methyl)-7-deazaguanosine). This is Queuine tRNA-ribosyltransferase from Vibrio atlanticus (strain LGP32) (Vibrio splendidus (strain Mel32)).